Here is a 482-residue protein sequence, read N- to C-terminus: uncharacterized protein (482 aa).

2 WD repeats span residues 92–133 (DMPN…REPI) and 191–230 (GHEH…CLCK).

The protein resides in the cytoplasm. Its subcellular location is the nucleus. This is an uncharacterized protein from Schizosaccharomyces pombe (strain 972 / ATCC 24843) (Fission yeast).